Consider the following 148-residue polypeptide: SsrA-binding protein (148 aa).

Residues 119-148 (AKGKKQHDKRETEKKRDWEREKARLMRSPG) are disordered. Residues 126 to 142 (DKRETEKKRDWEREKAR) are compositionally biased toward basic and acidic residues.

This sequence belongs to the SmpB family.

It is found in the cytoplasm. Its function is as follows. Required for rescue of stalled ribosomes mediated by trans-translation. Binds to transfer-messenger RNA (tmRNA), required for stable association of tmRNA with ribosomes. tmRNA and SmpB together mimic tRNA shape, replacing the anticodon stem-loop with SmpB. tmRNA is encoded by the ssrA gene; the 2 termini fold to resemble tRNA(Ala) and it encodes a 'tag peptide', a short internal open reading frame. During trans-translation Ala-aminoacylated tmRNA acts like a tRNA, entering the A-site of stalled ribosomes, displacing the stalled mRNA. The ribosome then switches to translate the ORF on the tmRNA; the nascent peptide is terminated with the 'tag peptide' encoded by the tmRNA and targeted for degradation. The ribosome is freed to recommence translation, which seems to be the essential function of trans-translation. In Paraburkholderia xenovorans (strain LB400), this protein is SsrA-binding protein.